Here is a 367-residue protein sequence, read N- to C-terminus: Phosphoribosylaminoimidazole-succinocarboxamide synthase (367 aa).

Belongs to the SAICAR synthetase family.

The enzyme catalyses 5-amino-1-(5-phospho-D-ribosyl)imidazole-4-carboxylate + L-aspartate + ATP = (2S)-2-[5-amino-1-(5-phospho-beta-D-ribosyl)imidazole-4-carboxamido]succinate + ADP + phosphate + 2 H(+). The protein operates within purine metabolism; IMP biosynthesis via de novo pathway; 5-amino-1-(5-phospho-D-ribosyl)imidazole-4-carboxamide from 5-amino-1-(5-phospho-D-ribosyl)imidazole-4-carboxylate: step 1/2. The polypeptide is Phosphoribosylaminoimidazole-succinocarboxamide synthase (Shewanella amazonensis (strain ATCC BAA-1098 / SB2B)).